Consider the following 692-residue polypeptide: Elongation factor G (692 aa).

One can recognise a tr-type G domain in the interval 8-283 (NRIRNIGIAA…AVIDYLPAPT (276 aa)). Residues 17 to 24 (AHIDAGKT), 81 to 85 (DTPGH), and 135 to 138 (NKMD) contribute to the GTP site.

Belongs to the TRAFAC class translation factor GTPase superfamily. Classic translation factor GTPase family. EF-G/EF-2 subfamily.

Its subcellular location is the cytoplasm. In terms of biological role, catalyzes the GTP-dependent ribosomal translocation step during translation elongation. During this step, the ribosome changes from the pre-translocational (PRE) to the post-translocational (POST) state as the newly formed A-site-bound peptidyl-tRNA and P-site-bound deacylated tRNA move to the P and E sites, respectively. Catalyzes the coordinated movement of the two tRNA molecules, the mRNA and conformational changes in the ribosome. This is Elongation factor G from Helicobacter pylori (strain Shi470).